Reading from the N-terminus, the 129-residue chain is MKTLQFFFLFCCWKAICCNSCELTNITIAIEKEECRFCISINTTWCAGYCYTRDLVYKDPARPNIQKTCTFKELVYETVRVPGCAHHADSLYTYPVATQCHCGKCDSDSTDCTVRGLGPSYCSFGEMKE.

The signal sequence occupies residues 1 to 20; the sequence is MKTLQFFFLFCCWKAICCNS. Intrachain disulfides connect Cys-21–Cys-69, Cys-35–Cys-84, Cys-38–Cys-122, Cys-46–Cys-100, Cys-50–Cys-102, and Cys-105–Cys-112. N-linked (GlcNAc...) asparagine glycans are attached at residues Asn-25 and Asn-42.

Belongs to the glycoprotein hormones subunit beta family. Heterodimer. The active follitropin is a heterodimer composed of an alpha chain/CGA shared with other hormones and a unique beta chain/FSHB shown here.

Its subcellular location is the secreted. In terms of biological role, together with the alpha chain CGA constitutes follitropin, the follicle-stimulating hormone, and provides its biological specificity to the hormone heterodimer. Binds FSHR, a G protein-coupled receptor, on target cells to activate downstream signaling pathways. Follitropin is involved in follicle development and spermatogenesis in reproductive organs. The chain is Follitropin subunit beta (FSHB) from Gorilla gorilla gorilla (Western lowland gorilla).